The sequence spans 94 residues: ESAT-6-like protein EsxL (94 aa).

The protein belongs to the WXG100 family. ESAT-6 subfamily. Strongly interacts with EsxK to form a heterodimeric complex under reducing conditions.

It is found in the secreted. In Mycobacterium bovis (strain ATCC BAA-935 / AF2122/97), this protein is ESAT-6-like protein EsxL.